The following is a 460-amino-acid chain: UDP-N-acetylmuramoylalanine--D-glutamate ligase (460 aa).

Position 122 to 128 (Gly122 to Thr128) interacts with ATP.

This sequence belongs to the MurCDEF family.

It localises to the cytoplasm. It carries out the reaction UDP-N-acetyl-alpha-D-muramoyl-L-alanine + D-glutamate + ATP = UDP-N-acetyl-alpha-D-muramoyl-L-alanyl-D-glutamate + ADP + phosphate + H(+). The protein operates within cell wall biogenesis; peptidoglycan biosynthesis. Cell wall formation. Catalyzes the addition of glutamate to the nucleotide precursor UDP-N-acetylmuramoyl-L-alanine (UMA). This is UDP-N-acetylmuramoylalanine--D-glutamate ligase from Jannaschia sp. (strain CCS1).